The chain runs to 190 residues: Threonylcarbamoyl-AMP synthase (190 aa).

A YrdC-like domain is found at 7-190 (LSSLIKCIRK…IVNGKLIRYV (184 aa)).

The protein belongs to the SUA5 family. TsaC subfamily.

Its subcellular location is the cytoplasm. The catalysed reaction is L-threonine + hydrogencarbonate + ATP = L-threonylcarbamoyladenylate + diphosphate + H2O. Functionally, required for the formation of a threonylcarbamoyl group on adenosine at position 37 (t(6)A37) in tRNAs that read codons beginning with adenine. Catalyzes the conversion of L-threonine, HCO(3)(-)/CO(2) and ATP to give threonylcarbamoyl-AMP (TC-AMP) as the acyladenylate intermediate, with the release of diphosphate. The protein is Threonylcarbamoyl-AMP synthase of Buchnera aphidicola subsp. Schizaphis graminum (strain Sg).